Reading from the N-terminus, the 528-residue chain is MKKIMLLLMTLLLVSLPLAQEAQADASVYSYQGIISHMAPPASPPAKPKTPVEKKNAAQIDQYIQGLDYDKNNILVYDGEAVKNVPPKAGYKEGNQYIVVEKKKKSINQNNADIQVINSLASLTYPGALVKANSELVENQPDVLPVKRDSVTLSIDLPGMVNHDNEIVVQNATKSNINDGVNTLVDRWNNKYSEEYPNISAKIDYDQEMAYSESQLVAKFGAAFKAVNNSLNVNFGAISEGKVQEEVINFKQIYYTVNVNEPTSPSRFFGKSVTKENLQALGVNAENPPAYISSVAYGRDIFVKLSTSSHSTRVKAAFDTAFKGKSVKGDTELENIIQNASFKAVIYGGSAKDEVEIIDGDLSKLRDILKQGANFDKKNPGVPIAYTTNFLKDNQLAVVKNNSEYIETTSKAYSDGKINLDHSGAYVARFNVTWDEVSYDANGNEVVEHKKWSENDKDKLAHFTTSIYLPGNARNINIHAKECTGLAWEWWRTVVDDRNLPLVKNRNVCIWGTTLYPAYSDTVDNPIK.

The first 23 residues, 1–23 (MKKIMLLLMTLLLVSLPLAQEAQ), serve as a signal peptide directing secretion. Beta stranded transmembrane passes span 213–226 (ESQLVAKFGAAFKA), 233–242 (VNFGAISEGK), 311–320 (STRVKAAFDT), and 328–340 (KGDTELENIIQNA). A Conserved undecapeptide motif is present at residues 482 to 492 (ECTGLAWEWWR). A Cholesterol binding motif is present at residues 514 to 515 (TL).

The protein belongs to the cholesterol-dependent cytolysin family. Homooligomeric pore complex of 35 to 50 subunits; when inserted in the host membrane.

It localises to the secreted. The protein localises to the host membrane. Its function is as follows. A cholesterol-dependent toxin that causes cytolysis by forming pores in cholesterol containing host membranes. After binding to target membranes, the protein undergoes a major conformation change, leading to its insertion in the host membrane and formation of an oligomeric pore complex. Cholesterol is required for binding to host membranes, membrane insertion and pore formation; cholesterol binding is mediated by a Thr-Leu pair in the C-terminus. Can be reversibly inactivated by oxidation. This is Ivanolysin (ilo) from Listeria ivanovii.